The primary structure comprises 205 residues: Small ribosomal subunit protein uS4 (205 aa).

Residues 103–173 enclose the S4 RNA-binding domain; that stretch reads RRLQTIVMKK…LEKSKRAEAA (71 aa). Residues 174–205 form a disordered region; the sequence is AREAAAEAAEAEQAAAQAAAPTPAPAAAAPKQ. The span at 179–205 shows a compositional bias: low complexity; it reads AEAAEAEQAAAQAAAPTPAPAAAAPKQ.

The protein belongs to the universal ribosomal protein uS4 family. As to quaternary structure, part of the 30S ribosomal subunit. Contacts protein S5. The interaction surface between S4 and S5 is involved in control of translational fidelity.

In terms of biological role, one of the primary rRNA binding proteins, it binds directly to 16S rRNA where it nucleates assembly of the body of the 30S subunit. Functionally, with S5 and S12 plays an important role in translational accuracy. The polypeptide is Small ribosomal subunit protein uS4 (Cenarchaeum symbiosum (strain A)).